The primary structure comprises 256 residues: Ribosomal RNA small subunit methyltransferase J (256 aa).

Residues 101–102, 117–118, 153–154, and Asp-176 contribute to the S-adenosyl-L-methionine site; these read RD, ER, and SS.

It belongs to the methyltransferase superfamily. RsmJ family.

The protein resides in the cytoplasm. It catalyses the reaction guanosine(1516) in 16S rRNA + S-adenosyl-L-methionine = N(2)-methylguanosine(1516) in 16S rRNA + S-adenosyl-L-homocysteine + H(+). In terms of biological role, specifically methylates the guanosine in position 1516 of 16S rRNA. In Photobacterium profundum (strain SS9), this protein is Ribosomal RNA small subunit methyltransferase J.